A 139-amino-acid polypeptide reads, in one-letter code: Histone H2B (139 aa).

A compositionally biased stretch (basic and acidic residues) spans 1 to 10 (MAPKAAEKKP). The disordered stretch occupies residues 1–47 (MAPKAAEKKPSTGGKAPAGGKAPAEKKEAGKKTAASGEKKKRTKARK). N6-acetyllysine; alternate is present on residues Lys-8 and Lys-9. Residues Lys-8 and Lys-9 each participate in a glycyl lysine isopeptide (Lys-Gly) (interchain with G-Cter in SUMO); alternate cross-link. A compositionally biased stretch (low complexity) spans 11–22 (STGGKAPAGGKA). Lys-15 carries the N6-acetyllysine modification. Lys-26 carries the post-translational modification N6-acetyllysine; alternate. A Glycyl lysine isopeptide (Lys-Gly) (interchain with G-Cter in SUMO); alternate cross-link involves residue Lys-26. Lys-27 participates in a covalent cross-link: Glycyl lysine isopeptide (Lys-Gly) (interchain with G-Cter in SUMO). Lys-133 participates in a covalent cross-link: Glycyl lysine isopeptide (Lys-Gly) (interchain with G-Cter in ubiquitin).

Belongs to the histone H2B family. The nucleosome is a histone octamer containing two molecules each of H2A, H2B, H3 and H4 assembled in one H3-H4 heterotetramer and two H2A-H2B heterodimers. The octamer wraps approximately 147 bp of DNA. Monoubiquitinated by the UBC2-BRE1 complex to form H2BK123ub1. H2BK123ub1 gives a specific tag for epigenetic transcriptional activation and is also prerequisite for H3K4me and H3K79me formation. H2BK123ub1 also modulates the formation of double-strand breaks during meiosis and is a prerequisite for DNA-damage checkpoint activation. Post-translationally, acetylated by GCN5 to form H2BK11ac and H2BK16ac. H2BK16ac can also be formed by ESA1. Acetylation of N-terminal lysines and particularly formation of H2BK11acK16ac has a positive effect on transcription. In terms of processing, sumoylation to form H2BK6su or H2BK7su, and probably also H2BK16su or H2BK17su, occurs preferentially near the telomeres and represses gene transcription.

It localises to the nucleus. Its subcellular location is the chromosome. Its function is as follows. Core component of nucleosome. Nucleosomes wrap and compact DNA into chromatin, limiting DNA accessibility to the cellular machineries which require DNA as a template. Histones thereby play a central role in transcription regulation, DNA repair, DNA replication and chromosomal stability. DNA accessibility is regulated via a complex set of post-translational modifications of histones, also called histone code, and nucleosome remodeling. The sequence is that of Histone H2B (HTB1) from Coccidioides immitis (strain RS) (Valley fever fungus).